A 435-amino-acid chain; its full sequence is Serine hydroxymethyltransferase (435 aa).

(6S)-5,6,7,8-tetrahydrofolate is bound by residues Leu-133 and 137–139 (GHL). At Lys-242 the chain carries N6-(pyridoxal phosphate)lysine.

Belongs to the SHMT family. In terms of assembly, homodimer. The cofactor is pyridoxal 5'-phosphate.

Its subcellular location is the cytoplasm. It catalyses the reaction (6R)-5,10-methylene-5,6,7,8-tetrahydrofolate + glycine + H2O = (6S)-5,6,7,8-tetrahydrofolate + L-serine. It functions in the pathway one-carbon metabolism; tetrahydrofolate interconversion. It participates in amino-acid biosynthesis; glycine biosynthesis; glycine from L-serine: step 1/1. Its function is as follows. Catalyzes the reversible interconversion of serine and glycine with tetrahydrofolate (THF) serving as the one-carbon carrier. This reaction serves as the major source of one-carbon groups required for the biosynthesis of purines, thymidylate, methionine, and other important biomolecules. Also exhibits THF-independent aldolase activity toward beta-hydroxyamino acids, producing glycine and aldehydes, via a retro-aldol mechanism. This chain is Serine hydroxymethyltransferase, found in Hyphomonas neptunium (strain ATCC 15444).